A 156-amino-acid chain; its full sequence is uncharacterized protein (156 aa).

Positions 11 to 156 constitute an N-acetyltransferase domain; it reads EEFRSYLTYT…ETDVVMSKKL (146 aa).

The protein belongs to the acetyltransferase family. In terms of assembly, homodimer.

This is an uncharacterized protein from Bacillus subtilis (strain 168).